The primary structure comprises 122 residues: Small ribosomal subunit protein uS13 (122 aa).

Positions 98–116 (VRGQKTKTNARTRKGRRKT) are enriched in basic residues. The interval 98-122 (VRGQKTKTNARTRKGRRKTVGAATK) is disordered.

Belongs to the universal ribosomal protein uS13 family. In terms of assembly, part of the 30S ribosomal subunit. Forms a loose heterodimer with protein S19. Forms two bridges to the 50S subunit in the 70S ribosome.

In terms of biological role, located at the top of the head of the 30S subunit, it contacts several helices of the 16S rRNA. In the 70S ribosome it contacts the 23S rRNA (bridge B1a) and protein L5 of the 50S subunit (bridge B1b), connecting the 2 subunits; these bridges are implicated in subunit movement. Contacts the tRNAs in the A and P-sites. The sequence is that of Small ribosomal subunit protein uS13 from Campylobacter fetus subsp. fetus (strain 82-40).